Here is a 414-residue protein sequence, read N- to C-terminus: GPI mannosyltransferase 1 (414 aa).

10 consecutive transmembrane segments (helical) span residues 6–26, 87–107, 119–139, 149–171, 183–203, 213–233, 282–302, 316–336, 356–376, and 387–407; these read ISHIIVLSLLIRIGFFLFGLY, YIFMISDLITGIIILKLLSGI, IIMLSSIWLLNPMVITISTRG, IMLSLYYLINKKSIIASGFWLGL, LPSIMLYLSTSGTPFIDVPIV, FLITTLITIGAFNGIMYSIYG, MEKFVMLPQLSISALILPLLF, FAFVTFNKVITSQYFIWFLIF, IVALLLWIVSQGSWLYFAYQL, and GLLFSSFFFYISNCWILSVFI.

Belongs to the PIGM family.

The protein localises to the endoplasmic reticulum membrane. It participates in glycolipid biosynthesis; glycosylphosphatidylinositol-anchor biosynthesis. Its function is as follows. Mannosyltransferase involved in glycosylphosphatidylinositol-anchor biosynthesis. Transfers the first alpha-1,4-mannose to GlcN-acyl-PI during GPI precursor assembly. Required for cell wall integrity. This Debaryomyces hansenii (strain ATCC 36239 / CBS 767 / BCRC 21394 / JCM 1990 / NBRC 0083 / IGC 2968) (Yeast) protein is GPI mannosyltransferase 1 (GPI14).